We begin with the raw amino-acid sequence, 243 residues long: Uridylate kinase (243 aa).

14-17 provides a ligand contact to ATP; that stretch reads KLSG. Gly-57 is a binding site for UMP. ATP contacts are provided by Gly-58 and Arg-62. UMP is bound by residues Asp-77 and 139 to 146; that span reads TGRPYFTT. Residues Asn-167, Tyr-173, and Asp-176 each coordinate ATP.

Belongs to the UMP kinase family. Homohexamer.

Its subcellular location is the cytoplasm. The catalysed reaction is UMP + ATP = UDP + ADP. Its pathway is pyrimidine metabolism; CTP biosynthesis via de novo pathway; UDP from UMP (UMPK route): step 1/1. With respect to regulation, inhibited by UTP. Catalyzes the reversible phosphorylation of UMP to UDP. The chain is Uridylate kinase from Mycoplasmopsis pulmonis (strain UAB CTIP) (Mycoplasma pulmonis).